A 160-amino-acid chain; its full sequence is NADH-quinone oxidoreductase subunit I (160 aa).

4Fe-4S ferredoxin-type domains are found at residues 51-81 (LRRY…IEAA) and 91-120 (VRYD…EGPN). [4Fe-4S] cluster-binding residues include cysteine 61, cysteine 64, cysteine 67, cysteine 71, cysteine 100, cysteine 103, cysteine 106, and cysteine 110.

The protein belongs to the complex I 23 kDa subunit family. NDH-1 is composed of 14 different subunits. Subunits NuoA, H, J, K, L, M, N constitute the membrane sector of the complex. It depends on [4Fe-4S] cluster as a cofactor.

It localises to the cell inner membrane. It catalyses the reaction a quinone + NADH + 5 H(+)(in) = a quinol + NAD(+) + 4 H(+)(out). In terms of biological role, NDH-1 shuttles electrons from NADH, via FMN and iron-sulfur (Fe-S) centers, to quinones in the respiratory chain. The immediate electron acceptor for the enzyme in this species is believed to be ubiquinone. Couples the redox reaction to proton translocation (for every two electrons transferred, four hydrogen ions are translocated across the cytoplasmic membrane), and thus conserves the redox energy in a proton gradient. The sequence is that of NADH-quinone oxidoreductase subunit I from Anaplasma marginale (strain St. Maries).